The sequence spans 250 residues: 2,3-bisphosphoglycerate-dependent phosphoglycerate mutase (250 aa).

Residues 8–15 (RHGQSAWN), 21–22 (TG), Arg-60, 87–90 (ERHY), Lys-98, 114–115 (RR), and 183–184 (GN) each bind substrate. Residue His-9 is the Tele-phosphohistidine intermediate of the active site. The Proton donor/acceptor role is filled by Glu-87.

Belongs to the phosphoglycerate mutase family. BPG-dependent PGAM subfamily. In terms of assembly, homodimer.

The enzyme catalyses (2R)-2-phosphoglycerate = (2R)-3-phosphoglycerate. It participates in carbohydrate degradation; glycolysis; pyruvate from D-glyceraldehyde 3-phosphate: step 3/5. Catalyzes the interconversion of 2-phosphoglycerate and 3-phosphoglycerate. The polypeptide is 2,3-bisphosphoglycerate-dependent phosphoglycerate mutase (Nitratidesulfovibrio vulgaris (strain DP4) (Desulfovibrio vulgaris)).